The sequence spans 449 residues: Heterogeneous nuclear ribonucleoprotein H (449 aa).

At M1 the chain carries N-acetylmethionine. At M2 the chain carries N-acetylmethionine; in Heterogeneous nuclear ribonucleoprotein H, N-terminally processed. Positions 11–90 (FVVKVRGLPW…RYVEVFKSNN (80 aa)) constitute an RRM 1 domain. S23 is subject to Phosphoserine. Residue K35 forms a Glycyl lysine isopeptide (Lys-Gly) (interchain with G-Cter in SUMO2) linkage. Phosphoserine occurs at positions 54 and 63. Residues K87 and K98 each participate in a glycyl lysine isopeptide (Lys-Gly) (interchain with G-Cter in SUMO2) cross-link. Residues 111 to 188 (GFVRLRGLPF…RYIEIFKSSR (78 aa)) form the RRM 2 domain. At R233 the chain carries Dimethylated arginine; alternate. R233 carries the omega-N-methylarginine; alternate modification. The 1-1 repeat unit spans residues 234 to 249 (GAYGGGYGGYDDYNGY). Positions 234-433 (GAYGGGYGGY…YGGQSSMSGY (200 aa)) are 2 X 16 AA Gly-rich approximate repeats. Y246 carries the phosphotyrosine modification. In terms of domain architecture, RRM 3 spans 289–364 (HCVHMRGLPY…RYVELFLNST (76 aa)). S310 carries the post-translational modification Phosphoserine. 3 tandem repeats follow at residues 354-372 (HRYV…GGAY), 374-392 (HRYV…GGAY), and 418-433 (GGYG…MSGY). The segment at 354 to 392 (HRYVELFLNSTAGASGGAYEHRYVELFLNSTAGASGGAY) is 2 X 19 AA perfect repeats.

Part of a ternary complex containing FUBP2, PTBP1, PTBP2 and HNRNPH1. Identified in the spliceosome C complex. Interacts with IGF2BP1. Interacts with CUGBP1; the interaction is RNA-dependent. Interacts with MBNL1; the interaction in RNA-independent.

The protein localises to the nucleus. It localises to the nucleoplasm. Functionally, this protein is a component of the heterogeneous nuclear ribonucleoprotein (hnRNP) complexes which provide the substrate for the processing events that pre-mRNAs undergo before becoming functional, translatable mRNAs in the cytoplasm. Mediates pre-mRNA alternative splicing regulation. Inhibits, together with CUGBP1, insulin receptor (IR) pre-mRNA exon 11 inclusion in myoblast. Binds to the IR RNA. Binds poly(RG). The sequence is that of Heterogeneous nuclear ribonucleoprotein H (Hnrnph1) from Mus musculus (Mouse).